The following is a 728-amino-acid chain: Fatty acid oxidation complex subunit alpha (728 aa).

Positions methionine 1 to proline 189 are enoyl-CoA hydratase/isomerase. Aspartate 296 provides a ligand contact to substrate. The tract at residues threonine 311–alanine 728 is 3-hydroxyacyl-CoA dehydrogenase. NAD(+) contacts are provided by residues methionine 324, aspartate 343, valine 400–glutamate 402, lysine 407, and serine 429. The active-site For 3-hydroxyacyl-CoA dehydrogenase activity is the histidine 450. Asparagine 453 is a binding site for NAD(+). Substrate-binding residues include asparagine 500 and tyrosine 660.

The protein in the N-terminal section; belongs to the enoyl-CoA hydratase/isomerase family. This sequence in the C-terminal section; belongs to the 3-hydroxyacyl-CoA dehydrogenase family. Heterotetramer of two alpha chains (FadB) and two beta chains (FadA).

The enzyme catalyses a (3S)-3-hydroxyacyl-CoA + NAD(+) = a 3-oxoacyl-CoA + NADH + H(+). It carries out the reaction a (3S)-3-hydroxyacyl-CoA = a (2E)-enoyl-CoA + H2O. The catalysed reaction is a 4-saturated-(3S)-3-hydroxyacyl-CoA = a (3E)-enoyl-CoA + H2O. It catalyses the reaction (3S)-3-hydroxybutanoyl-CoA = (3R)-3-hydroxybutanoyl-CoA. The enzyme catalyses a (3Z)-enoyl-CoA = a 4-saturated (2E)-enoyl-CoA. It carries out the reaction a (3E)-enoyl-CoA = a 4-saturated (2E)-enoyl-CoA. Its pathway is lipid metabolism; fatty acid beta-oxidation. Its function is as follows. Involved in the aerobic and anaerobic degradation of long-chain fatty acids via beta-oxidation cycle. Catalyzes the formation of 3-oxoacyl-CoA from enoyl-CoA via L-3-hydroxyacyl-CoA. It can also use D-3-hydroxyacyl-CoA and cis-3-enoyl-CoA as substrate. The chain is Fatty acid oxidation complex subunit alpha from Photorhabdus laumondii subsp. laumondii (strain DSM 15139 / CIP 105565 / TT01) (Photorhabdus luminescens subsp. laumondii).